Reading from the N-terminus, the 183-residue chain is NEDD8-conjugating enzyme Ubc12 (183 aa).

Methionine 1 carries the post-translational modification N-acetylmethionine. The segment at 1–28 (MIKLFSLKQQKKEEESAGGTKGSSKKAS) is disordered. The 145-residue stretch at 29 to 173 (AAQLRIQKDI…VQRSMRGGYI (145 aa)) folds into the UBC core domain. Cysteine 111 serves as the catalytic Glycyl thioester intermediate.

It belongs to the ubiquitin-conjugating enzyme family. UBC12 subfamily. The acetylation of Met-1 increases affinity for DCUN1D1 by about 2 orders of magnitude and is crucial for NEDD8 transfer to cullins.

The catalysed reaction is [E1 NEDD8-activating enzyme]-S-[NEDD8 protein]-yl-L-cysteine + [E2 NEDD8-conjugating enzyme]-L-cysteine = [E1 NEDD8-activating enzyme]-L-cysteine + [E2 NEDD8-conjugating enzyme]-S-[NEDD8-protein]-yl-L-cysteine.. It participates in protein modification; protein neddylation. Its function is as follows. Accepts the ubiquitin-like protein NEDD8 from the UBA3-NAE1 E1 complex and catalyzes its covalent attachment to other proteins. The specific interaction with the E3 ubiquitin ligase rbx1, but not rbx2, suggests that the rbx1-ube2m complex neddylates specific target proteins, such as cul1, cul2, cul3 and cul4. Involved in cell proliferation. In Xenopus laevis (African clawed frog), this protein is NEDD8-conjugating enzyme Ubc12 (ube2m).